We begin with the raw amino-acid sequence, 280 residues long: tRNA pseudouridine synthase A (280 aa).

The active-site Nucleophile is aspartate 55. Residue tyrosine 110 participates in substrate binding.

It belongs to the tRNA pseudouridine synthase TruA family.

The enzyme catalyses uridine(38/39/40) in tRNA = pseudouridine(38/39/40) in tRNA. Formation of pseudouridine at positions 38, 39 and 40 in the anticodon stem and loop of transfer RNAs. This Methanosphaerula palustris (strain ATCC BAA-1556 / DSM 19958 / E1-9c) protein is tRNA pseudouridine synthase A.